A 243-amino-acid polypeptide reads, in one-letter code: Pyridoxine 5'-phosphate synthase (243 aa).

A 3-amino-2-oxopropyl phosphate-binding site is contributed by Asn-9. 1-deoxy-D-xylulose 5-phosphate is bound at residue 11–12 (DH). Arg-20 lines the 3-amino-2-oxopropyl phosphate pocket. His-45 (proton acceptor) is an active-site residue. 1-deoxy-D-xylulose 5-phosphate is bound by residues Arg-47 and His-52. Glu-72 functions as the Proton acceptor in the catalytic mechanism. Thr-102 provides a ligand contact to 1-deoxy-D-xylulose 5-phosphate. His-193 serves as the catalytic Proton donor. Residues Gly-194 and 215 to 216 (GH) contribute to the 3-amino-2-oxopropyl phosphate site.

It belongs to the PNP synthase family. As to quaternary structure, homooctamer; tetramer of dimers.

Its subcellular location is the cytoplasm. It catalyses the reaction 3-amino-2-oxopropyl phosphate + 1-deoxy-D-xylulose 5-phosphate = pyridoxine 5'-phosphate + phosphate + 2 H2O + H(+). It participates in cofactor biosynthesis; pyridoxine 5'-phosphate biosynthesis; pyridoxine 5'-phosphate from D-erythrose 4-phosphate: step 5/5. Catalyzes the complicated ring closure reaction between the two acyclic compounds 1-deoxy-D-xylulose-5-phosphate (DXP) and 3-amino-2-oxopropyl phosphate (1-amino-acetone-3-phosphate or AAP) to form pyridoxine 5'-phosphate (PNP) and inorganic phosphate. The protein is Pyridoxine 5'-phosphate synthase of Vibrio vulnificus (strain CMCP6).